A 234-amino-acid polypeptide reads, in one-letter code: UPF0173 metal-dependent hydrolase Atu1317 (234 aa).

This sequence belongs to the UPF0173 family.

In Agrobacterium fabrum (strain C58 / ATCC 33970) (Agrobacterium tumefaciens (strain C58)), this protein is UPF0173 metal-dependent hydrolase Atu1317.